The following is a 198-amino-acid chain: Carnitine operon protein CaiE (198 aa).

Residues 179 to 198 (VEENRPRLKGTTDVKPKSAQ) are disordered. Positions 180–198 (EENRPRLKGTTDVKPKSAQ) are enriched in basic and acidic residues.

It belongs to the transferase hexapeptide repeat family.

The protein operates within amine and polyamine metabolism; carnitine metabolism. In terms of biological role, overproduction of CaiE stimulates the activity of CaiB and CaiD. In Salmonella enteritidis PT4 (strain P125109), this protein is Carnitine operon protein CaiE.